A 122-amino-acid polypeptide reads, in one-letter code: Large ribosomal subunit protein uL14 (122 aa).

It belongs to the universal ribosomal protein uL14 family. As to quaternary structure, part of the 50S ribosomal subunit. Forms a cluster with proteins L3 and L19. In the 70S ribosome, L14 and L19 interact and together make contacts with the 16S rRNA in bridges B5 and B8.

In terms of biological role, binds to 23S rRNA. Forms part of two intersubunit bridges in the 70S ribosome. The chain is Large ribosomal subunit protein uL14 from Rhizobium johnstonii (strain DSM 114642 / LMG 32736 / 3841) (Rhizobium leguminosarum bv. viciae).